The following is a 576-amino-acid chain: Glutamine--tRNA ligase (576 aa).

The 'HIGH' region signature appears at 47-57; the sequence is PEPNGYLHIGH. Residues 48-50 and 54-60 each bind ATP; these read EPN and HIGHAKS. 2 residues coordinate L-glutamine: aspartate 80 and tyrosine 229. ATP is bound by residues threonine 248 and 283–284; that span reads RL. Residues 290 to 294 carry the 'KMSKS' region motif; that stretch reads ITSKR.

This sequence belongs to the class-I aminoacyl-tRNA synthetase family. In terms of assembly, monomer.

The protein resides in the cytoplasm. The enzyme catalyses tRNA(Gln) + L-glutamine + ATP = L-glutaminyl-tRNA(Gln) + AMP + diphosphate. This Ralstonia pickettii (strain 12J) protein is Glutamine--tRNA ligase.